An 893-amino-acid polypeptide reads, in one-letter code: MNKHHPKLRSFYSIRKSTLGVASVIVSTLFLITSQHQAQAAENTNTSDKISENQNSNATTTQPPKDTNQTQPATQPANTAKTYPAADESLKDAIKNPAVENKEHDIGPREQVNFLLLDKNNETQYYHFFSIKDPADVYYTKKKAEVELDINTASTWKKFEVYENNQKLPVRLVSYSPVPEDHAYIRFPVSDGTQELKIVSSTQIDDGAETNYDYTKLVFAKPIYNDPSLVKSDTNDAVATNDQSSSDASNQTNTNTSNQNTSTTNNTSDQPQATTNMSQPAQPKLSANADQASSQPAHETNSNGNTNDKTNESSNQSDVNQQYPPADESLQDAIKNPAIIDKEHTADNWRPIDFQMKNDKGERQFYHYASTVEPATVIFTKTGPIIELGLKTALTWKKLEVYEGDKKLPVELVSYDSDKDYAYIRFPVSNGTREVKIVSSIEYGENIHEDYDYTLMVFAQPITNNPDDYVDEETYNLQKLLAPYHKAKTLERQVYELEKLQEKLPEKYKAEYKKKLDQTRVELADQVKSAVTEFENVTPTNDQLTDVQEAHFVVFESEENNESVMDGFVEHPFYTATLNGQKYVVMKTKDDSYWKDLIVEGKRVTTVSKDTKNNSRTLIFPYIPDKAVYNAIVKVVVANIGYEGQYHVRIINQDIKTKDDDTSQNNTSEHLNGQTVQEDNVTATDTATNNSIETTPREATDKVDLIEPESDMVKDADSSVDKDAHHDVDHLSDMSGNTHFDKYDLKEMDTQIAKDTDKGVDNSVGMSSNVDTDKDSNKNKDKVIQLDHIADKNKVNNTGTETNIDTMKYHPISTIKVTDKKTTEHLPSDIHKTVDKTVKTKEKASTPSKENKLSQSKMLPKTGETTSSQSWWSLYALLGMLALFIPKFRKESK.

Residues 1-40 (MNKHHPKLRSFYSIRKSTLGVASVIVSTLFLITSQHQAQA) form the signal peptide. Residues 42 to 81 (ENTNTSDKISENQNSNATTTQPPKDTNQTQPATQPANTAK) are compositionally biased toward polar residues. Disordered regions lie at residues 42–84 (ENTN…KTYP) and 226–324 (DPSL…QQYP). One can recognise an NEAT 1 domain in the interval 105–232 (DIGPREQVNF…IYNDPSLVKS (128 aa)). Over residues 239–270 (ATNDQSSSDASNQTNTNTSNQNTSTTNNTSDQ) the composition is skewed to low complexity. Polar residues-rich tracts occupy residues 271 to 281 (PQATTNMSQPA) and 288 to 323 (NADQ…NQQY). NEAT domains lie at 345-471 (TADN…DYVD) and 543-660 (QLTD…TKDD). Disordered regions lie at residues 658-696 (KDDD…ETTP), 713-733 (VKDA…HLSD), 754-778 (KDTD…DSNK), and 837-865 (TVKT…TGET). Over residues 663-678 (SQNNTSEHLNGQTVQE) the composition is skewed to polar residues. The segment covering 679 to 690 (DNVTATDTATNN) has biased composition (low complexity). Basic and acidic residues predominate over residues 713-732 (VKDADSSVDKDAHHDVDHLS). The span at 837-852 (TVKTKEKASTPSKENK) shows a compositional bias: basic and acidic residues. The span at 853–865 (LSQSKMLPKTGET) shows a compositional bias: polar residues. Positions 859–863 (LPKTG) match the LPXTG sorting signal motif. Thr-862 is subject to Pentaglycyl murein peptidoglycan amidated threonine. The propeptide at 863–893 (GETTSSQSWWSLYALLGMLALFIPKFRKESK) is removed by sortase.

Belongs to the IsdH family.

It localises to the secreted. The protein localises to the cell wall. Binds human plasma haptoglobin-hemoglobin complexes, haptoglobin and hemoglobin. Binds haptoglobin-hemoglobin complexes with significantly higher affinity than haptoglobin alone. This chain is Iron-regulated surface determinant protein H (isdH), found in Staphylococcus aureus (strain bovine RF122 / ET3-1).